We begin with the raw amino-acid sequence, 172 residues long: Type IV secretion system putative outer membrane lipoprotein BAB2_0057 (172 aa).

The signal sequence occupies residues 1–15; that stretch reads MRTLVMVACAVSLAA. Cysteine 16 is lipidated: N-palmitoyl cysteine. Cysteine 16 carries S-diacylglycerol cysteine lipidation. Residues 58–172 enclose the OmpA-like domain; it reads WPARPPKQTV…RRVDIEILRK (115 aa).

It localises to the cell outer membrane. Its function is as follows. The virB operon is essential for intracellular survival and is not involved in the invasion process. Constitutes a major determinant of virulence in mice. This protein is essential for pathogenesis in mice but is not required for intracellular survival. This chain is Type IV secretion system putative outer membrane lipoprotein BAB2_0057, found in Brucella abortus (strain 2308).